Here is a 275-residue protein sequence, read N- to C-terminus: 4-diphosphocytidyl-2-C-methyl-D-erythritol kinase (275 aa).

Residue K8 is part of the active site. Residue 86–96 (PEGAGLGGGSS) participates in ATP binding. Residue D125 is part of the active site.

It belongs to the GHMP kinase family. IspE subfamily.

It catalyses the reaction 4-CDP-2-C-methyl-D-erythritol + ATP = 4-CDP-2-C-methyl-D-erythritol 2-phosphate + ADP + H(+). It participates in isoprenoid biosynthesis; isopentenyl diphosphate biosynthesis via DXP pathway; isopentenyl diphosphate from 1-deoxy-D-xylulose 5-phosphate: step 3/6. Catalyzes the phosphorylation of the position 2 hydroxy group of 4-diphosphocytidyl-2C-methyl-D-erythritol. The chain is 4-diphosphocytidyl-2-C-methyl-D-erythritol kinase from Thermus thermophilus (strain ATCC BAA-163 / DSM 7039 / HB27).